Reading from the N-terminus, the 491-residue chain is Ketol-acid reductoisomerase (NADP(+)) (491 aa).

In terms of domain architecture, KARI N-terminal Rossmann spans 15–208 (AQLGTCRFME…GGHRAGVLES (194 aa)). NADP(+) contacts are provided by residues 45–48 (CGAQ), arginine 68, arginine 76, serine 78, and 108–110 (DKQ). The active site involves histidine 132. Residue glycine 158 participates in NADP(+) binding. 2 consecutive KARI C-terminal knotted domains span residues 209–353 (SFVA…KEQE) and 354–486 (YFDK…MTAM). Mg(2+) is bound by residues aspartate 217, glutamate 221, glutamate 389, and glutamate 393. Serine 414 is a binding site for substrate.

Belongs to the ketol-acid reductoisomerase family. Mg(2+) serves as cofactor.

The catalysed reaction is (2R)-2,3-dihydroxy-3-methylbutanoate + NADP(+) = (2S)-2-acetolactate + NADPH + H(+). The enzyme catalyses (2R,3R)-2,3-dihydroxy-3-methylpentanoate + NADP(+) = (S)-2-ethyl-2-hydroxy-3-oxobutanoate + NADPH + H(+). It functions in the pathway amino-acid biosynthesis; L-isoleucine biosynthesis; L-isoleucine from 2-oxobutanoate: step 2/4. Its pathway is amino-acid biosynthesis; L-valine biosynthesis; L-valine from pyruvate: step 2/4. Its function is as follows. Involved in the biosynthesis of branched-chain amino acids (BCAA). Catalyzes an alkyl-migration followed by a ketol-acid reduction of (S)-2-acetolactate (S2AL) to yield (R)-2,3-dihydroxy-isovalerate. In the isomerase reaction, S2AL is rearranged via a Mg-dependent methyl migration to produce 3-hydroxy-3-methyl-2-ketobutyrate (HMKB). In the reductase reaction, this 2-ketoacid undergoes a metal-dependent reduction by NADPH to yield (R)-2,3-dihydroxy-isovalerate. The sequence is that of Ketol-acid reductoisomerase (NADP(+)) from Christiangramia forsetii (strain DSM 17595 / CGMCC 1.15422 / KT0803) (Gramella forsetii).